A 235-amino-acid chain; its full sequence is Small ribosomal subunit protein uS2c (235 aa).

Belongs to the universal ribosomal protein uS2 family.

The protein resides in the plastid. Its subcellular location is the chloroplast. The polypeptide is Small ribosomal subunit protein uS2c (rps2) (Adiantum capillus-veneris (Maidenhair fern)).